A 219-amino-acid polypeptide reads, in one-letter code: Glutathione S-transferase F13 (219 aa).

Residues 2-82 (AMKLYGDEMS…YIAEKHRDKG (81 aa)) enclose the GST N-terminal domain. Glutathione-binding positions include 11–12 (SA), 40–41 (HK), 53–54 (KV), and 66–67 (ES). Residues 90 to 217 (DPKEAAIVKL…VSPGLTVAPT (128 aa)) form the GST C-terminal domain.

Belongs to the GST superfamily. Phi family.

Its subcellular location is the cytoplasm. It is found in the cytosol. The catalysed reaction is RX + glutathione = an S-substituted glutathione + a halide anion + H(+). May be involved in the conjugation of reduced glutathione to a wide number of exogenous and endogenous hydrophobic electrophiles and have a detoxification role against certain herbicides. This Arabidopsis thaliana (Mouse-ear cress) protein is Glutathione S-transferase F13 (GSTF13).